Here is a 228-residue protein sequence, read N- to C-terminus: Ribonuclease 3 (228 aa).

The RNase III domain maps to leucine 5–glycine 127. Glutamate 40 provides a ligand contact to Mg(2+). Aspartate 44 is an active-site residue. Residues aspartate 113 and glutamate 116 each contribute to the Mg(2+) site. Glutamate 116 is an active-site residue. One can recognise a DRBM domain in the interval aspartate 154–alanine 224.

The protein belongs to the ribonuclease III family. In terms of assembly, homodimer. Mg(2+) serves as cofactor.

It localises to the cytoplasm. The enzyme catalyses Endonucleolytic cleavage to 5'-phosphomonoester.. Its function is as follows. Digests double-stranded RNA. Involved in the processing of primary rRNA transcript to yield the immediate precursors to the large and small rRNAs (23S and 16S). Processes some mRNAs, and tRNAs when they are encoded in the rRNA operon. Processes pre-crRNA and tracrRNA of type II CRISPR loci if present in the organism. This Albidiferax ferrireducens (strain ATCC BAA-621 / DSM 15236 / T118) (Rhodoferax ferrireducens) protein is Ribonuclease 3.